The chain runs to 684 residues: DNA ligase (684 aa).

NAD(+) is bound by residues 34–38 (DFQYD), 83–84 (SL), and glutamate 117. Lysine 119 acts as the N6-AMP-lysine intermediate in catalysis. Residues arginine 140, glutamate 186, lysine 300, and lysine 324 each contribute to the NAD(+) site. Residues cysteine 418, cysteine 421, cysteine 436, and cysteine 442 each contribute to the Zn(2+) site. In terms of domain architecture, BRCT spans 601-684 (PVNLNFDGMK…EMLGEVGSNE (84 aa)).

The protein belongs to the NAD-dependent DNA ligase family. LigA subfamily. Mg(2+) is required as a cofactor. Requires Mn(2+) as cofactor.

The enzyme catalyses NAD(+) + (deoxyribonucleotide)n-3'-hydroxyl + 5'-phospho-(deoxyribonucleotide)m = (deoxyribonucleotide)n+m + AMP + beta-nicotinamide D-nucleotide.. Functionally, DNA ligase that catalyzes the formation of phosphodiester linkages between 5'-phosphoryl and 3'-hydroxyl groups in double-stranded DNA using NAD as a coenzyme and as the energy source for the reaction. It is essential for DNA replication and repair of damaged DNA. The protein is DNA ligase of Chlorobium phaeobacteroides (strain BS1).